The sequence spans 287 residues: Deoxyuridine 5'-triphosphate nucleotidohydrolase (287 aa).

Arginine 173–glycine 175 provides a ligand contact to substrate. The span at serine 264–serine 275 shows a compositional bias: low complexity. The interval serine 264–methionine 287 is disordered.

This sequence belongs to the dUTPase family. It depends on Mg(2+) as a cofactor.

It catalyses the reaction dUTP + H2O = dUMP + diphosphate + H(+). Its function is as follows. Involved in nucleotide metabolism: produces dUMP, the immediate precursor of thymidine nucleotides and decreases the intracellular concentration of dUTP to avoid uracil incorporation into viral DNA. This is Deoxyuridine 5'-triphosphate nucleotidohydrolase from Saimiriine herpesvirus 2 (strain 11) (SaHV-2).